Reading from the N-terminus, the 455-residue chain is Inactive peptidyl-prolyl cis-trans isomerase shutdown (455 aa).

Positions 34–54 (SQQNHARDLGLDSDSDSDYED) are disordered. Acidic residues predominate over residues 44 to 54 (LDSDSDSDYED). The PPIase FKBP-type domain maps to 103–192 (KARVSVRYSG…LFKVEVIDYS (90 aa)). 2 TPR repeats span residues 218–251 (AVDL…LNYC) and 303–336 (CKAL…QPAN).

This sequence belongs to the FKBP6 family. In terms of assembly, interacts with Hsp83. As to expression, strongly expressed in the germline stem cells and in 16-cell cysts. Present in the germ cells throughout embryogenesis. Defects are due to derepression of transposable elements and impaired piRNA biogenesis.

The protein resides in the cytoplasm. It is found in the cytoplasmic ribonucleoprotein granule. Its function is as follows. Co-chaperone required during oogenesis to repress transposable elements and prevent their mobilization, which is essential for the germline integrity. Acts via the piRNA metabolic process, which mediates the repression of transposable elements during meiosis by forming complexes composed of piRNAs and Piwi proteins and govern the methylation and subsequent repression of transposons. Acts as a co-chaperone via its interaction with Hsp83/HSP90 and is required for the biogenesis of all three piRNA major populations. This chain is Inactive peptidyl-prolyl cis-trans isomerase shutdown, found in Drosophila melanogaster (Fruit fly).